The following is a 170-amino-acid chain: 3-hydroxyanthranilate 3,4-dioxygenase (170 aa).

O2 is bound at residue arginine 44. The Fe cation site is built by histidine 48, glutamate 54, and histidine 92. Glutamate 54 serves as a coordination point for substrate. Positions 96 and 106 each coordinate substrate. Positions 121, 124, 158, and 161 each coordinate a divalent metal cation.

It belongs to the 3-HAO family. It depends on Fe(2+) as a cofactor.

The protein localises to the cytoplasm. The enzyme catalyses 3-hydroxyanthranilate + O2 = (2Z,4Z)-2-amino-3-carboxymuconate 6-semialdehyde. Its pathway is cofactor biosynthesis; NAD(+) biosynthesis; quinolinate from L-kynurenine: step 3/3. In terms of biological role, catalyzes the oxidative ring opening of 3-hydroxyanthranilate to 2-amino-3-carboxymuconate semialdehyde, which spontaneously cyclizes to quinolinate. The sequence is that of 3-hydroxyanthranilate 3,4-dioxygenase from Scheffersomyces stipitis (strain ATCC 58785 / CBS 6054 / NBRC 10063 / NRRL Y-11545) (Yeast).